We begin with the raw amino-acid sequence, 295 residues long: Ubiquinol-cytochrome c reductase complex assembly factor 1 (295 aa).

The protein belongs to the CBP3 family. Interacts with UQCC2. Interacts with UQCC3. Forms a complex, named COMB/coordinator of mitochondrial CYTB biogenesis, composed of UQCC1, UQCC2, UQCC4, UQCC5 and UQCC6; stabilizes nascent cytochrome b/MT-CYB and promotes its membrane insertion. Forms a complex, named COMA, composed of UQCC1, UQCC2 and UQCC4; activates MT-CYB translation. Forms a complex, named COMC, composed of UQCC1, UQCC2; UQCC3 and UQCC4; mediates MT-CYB hemylation and association with the first nuclear-encoded CIII subunit UQCRQ. As to expression, in the brain it is restricted to the olfactory bulb, the hippocampus, the piriform cortex and the Purkinje cells.

It is found in the mitochondrion inner membrane. The protein resides in the cytoplasmic vesicle. Required for the assembly of the ubiquinol-cytochrome c reductase complex (mitochondrial respiratory chain complex III or cytochrome b-c1 complex). Involved in cytochrome b translation and/or stability. The polypeptide is Ubiquinol-cytochrome c reductase complex assembly factor 1 (Uqcc1) (Mus musculus (Mouse)).